A 96-amino-acid polypeptide reads, in one-letter code: MMKRVHVYVKGKVQGVFFRAHTRKAALRFHVNGWVRNLPNGRVEAVFEGRSPEVNALIDWCRQGPSHAIVEHLDVCEETYTGEFDDFRILYDERAS.

The Acylphosphatase-like domain maps to 4–91 (RVHVYVKGKV…GEFDDFRILY (88 aa)). Active-site residues include Arg-19 and Asn-37.

The protein belongs to the acylphosphatase family.

The enzyme catalyses an acyl phosphate + H2O = a carboxylate + phosphate + H(+). This is Acylphosphatase (acyP) from Syntrophus aciditrophicus (strain SB).